The sequence spans 386 residues: S-adenosylmethionine synthase (386 aa).

His-16 is a binding site for ATP. Asp-18 is a binding site for Mg(2+). Residue Glu-44 coordinates K(+). Residues Glu-57 and Gln-100 each coordinate L-methionine. The tract at residues 100–110 is flexible loop; sequence QSPDINQGVDR. ATP-binding positions include 164–166, 230–231, Asp-239, 245–246, Ala-262, and Lys-266; these read DGK, KF, and RK. Residue Asp-239 coordinates L-methionine. Lys-270 is an L-methionine binding site.

This sequence belongs to the AdoMet synthase family. As to quaternary structure, homotetramer; dimer of dimers. It depends on Mg(2+) as a cofactor. Requires K(+) as cofactor.

The protein resides in the cytoplasm. The enzyme catalyses L-methionine + ATP + H2O = S-adenosyl-L-methionine + phosphate + diphosphate. It participates in amino-acid biosynthesis; S-adenosyl-L-methionine biosynthesis; S-adenosyl-L-methionine from L-methionine: step 1/1. Its function is as follows. Catalyzes the formation of S-adenosylmethionine (AdoMet) from methionine and ATP. The overall synthetic reaction is composed of two sequential steps, AdoMet formation and the subsequent tripolyphosphate hydrolysis which occurs prior to release of AdoMet from the enzyme. The protein is S-adenosylmethionine synthase of Helicobacter hepaticus (strain ATCC 51449 / 3B1).